The chain runs to 135 residues: Transcription antitermination protein NusB (135 aa).

Belongs to the NusB family.

Its function is as follows. Involved in transcription antitermination. Required for transcription of ribosomal RNA (rRNA) genes. Binds specifically to the boxA antiterminator sequence of the ribosomal RNA (rrn) operons. This is Transcription antitermination protein NusB from Shewanella pealeana (strain ATCC 700345 / ANG-SQ1).